A 368-amino-acid chain; its full sequence is 7,8-didemethyl-8-hydroxy-5-deazariboflavin synthase (368 aa).

The Radical SAM core domain occupies 36–272 (LSYCRNVFLP…EEVSVQVPPN (237 aa)). [4Fe-4S] cluster is bound by residues cysteine 50, cysteine 54, and cysteine 57.

Belongs to the radical SAM superfamily. CofG family. Consists of two subunits, CofG and CofH. The cofactor is [4Fe-4S] cluster.

The catalysed reaction is 5-amino-5-(4-hydroxybenzyl)-6-(D-ribitylimino)-5,6-dihydrouracil + S-adenosyl-L-methionine = 7,8-didemethyl-8-hydroxy-5-deazariboflavin + 5'-deoxyadenosine + L-methionine + NH4(+) + H(+). Its pathway is cofactor biosynthesis; coenzyme F0 biosynthesis. In terms of biological role, catalyzes the radical-mediated synthesis of 7,8-didemethyl-8-hydroxy-5-deazariboflavin from 5-amino-5-(4-hydroxybenzyl)-6-(D-ribitylimino)-5,6-dihydrouracil. This Haloarcula marismortui (strain ATCC 43049 / DSM 3752 / JCM 8966 / VKM B-1809) (Halobacterium marismortui) protein is 7,8-didemethyl-8-hydroxy-5-deazariboflavin synthase.